Here is a 105-residue protein sequence, read N- to C-terminus: Small ribosomal subunit protein uS10 (105 aa).

It belongs to the universal ribosomal protein uS10 family. In terms of assembly, part of the 30S ribosomal subunit.

Involved in the binding of tRNA to the ribosomes. The chain is Small ribosomal subunit protein uS10 from Rickettsia akari (strain Hartford).